Consider the following 913-residue polypeptide: SUN domain-containing protein 1 (913 aa).

The LMNA-binding stretch occupies residues 1–139 (MDFSRLHTYT…VLRHPVLDES (139 aa)). Topologically, residues 1 to 415 (MDFSRLHTYT…LTRCLRNICK (415 aa)) are nuclear. Phosphoserine is present on residues S48 and S66. The span at 69–81 (SQAIDSHISTSRA) shows a compositional bias: polar residues. Residues 69–120 (SQAIDSHISTSRATPAKGRETRTVKQRRSASKPAFSINHLSGKGLSSSTSHD) form a disordered region. A compositionally biased stretch (low complexity) spans 108–120 (LSGKGLSSSTSHD). A Phosphoserine modification is found at S139. An SYNE2-binding region spans residues 209-302 (SRVYSRDRTL…MTAGELSRVD (94 aa)). The segment at 223 to 302 (VSFYLDRTLW…MTAGELSRVD (80 aa)) is EMD-binding. A helical transmembrane segment spans residues 416 to 436 (VFVLLLPLLLLLGAGVSLWGQ). Residues 437 to 913 (GNFFSLLPVL…RFRVHGEPIQ (477 aa)) are Perinuclear space-facing. A disordered region spans residues 456 to 485 (RVDDSKGMHRPGPLPPSPPPKVDHKASQWP). Coiled coils occupy residues 491–533 (GQKV…EGLS) and 563–638 (HHDH…CEQA). Residues 703-913 (TSEAIVSAVN…RFRVHGEPIQ (211 aa)) form a sufficient for interaction with SYNE1 and SYNE2 region. One can recognise an SUN domain in the interval 751–912 (GGSILSTRCS…YRFRVHGEPI (162 aa)).

As to quaternary structure, core component of the LINC complex which is composed of inner nuclear membrane SUN domain-containing proteins coupled to outer nuclear membrane KASH domain-containing nesprins. SUN and KASH domain-containing proteins seem to bind each other promiscuously; however, differentially expression of LINC complex constituents is giving rise to specific assemblies. At least SUN1/2-containing core LINC complexes are proposed to be hexameric composed of three protomers of each KASH and SUN domain-containing protein. Interacts with KASH5 (via the last 22 amino acids); this interaction mediates KASH5 telomere localization by forming a SUN1:KASH5 LINC complex. Isoform 5 is proposed to form a non-nuclear spermatogenesis-specific LINC complex with SYNE3 during sperm head formation. Interacts with SYNE2 and SYNE1; probably forming respective LINC complexes. Interacts with A-type lamin with a strong preference for unprocessed A-type lamin compared with the mature protein. Interaction with lamins B1 and C is hardly detectable. Interacts with NAT10. Interacts with EMD and TSNAX. Associates with the nuclear pore complex (NPC). Interacts with CCDC79/TERB1; promoting the accumulation of the LINC complex complexes at the telomere-nuclear envelope attachment sites. Interacts with IRAG2. Interacts (via KASH domain) with TMEM258. The disulfide bond with KASH domain-containing nesprins is required for stability of the respective LINC complexes under tensile forces. In terms of tissue distribution, widely expressed. Expressed in cochlear outer hair cells (at protein level). Seven isoforms are expressed in testis including testis-specific isoform 5. Isoform 5 is the only isoform expressed at the end of sperm differentiation. Six isoforms are expressed in muscle, heart and brain, four isoforms in kidney and three isoforms in liver.

The protein localises to the nucleus inner membrane. It localises to the cytoplasmic vesicle. Its subcellular location is the secretory vesicle. It is found in the acrosome outer membrane. As a component of the LINC (LInker of Nucleoskeleton and Cytoskeleton) complex involved in the connection between the nuclear lamina and the cytoskeleton. The nucleocytoplasmic interactions established by the LINC complex play an important role in the transmission of mechanical forces across the nuclear envelope and in nuclear movement and positioning. Required for interkinetic nuclear migration (INM) and essential for nucleokinesis and centrosome-nucleus coupling during radial neuronal migration in the cerebral cortex and during glial migration. Involved in telomere attachment to nuclear envelope in the prophase of meiosis implicating a SUN1/2:KASH5 LINC complex in which SUN1 and SUN2 seem to act at least partial redundantly. Required for gametogenesis and involved in selective gene expression of coding and non-coding RNAs needed for gametogenesis. Helps to define the distribution of nuclear pore complexes (NPCs). Required for efficient localization of SYNE4 in the nuclear envelope. May be involved in nuclear remodeling during sperm head formation in spermatogenesis. May play a role in DNA repair by suppressing non-homologous end joining repair to facilitate the repair of DNA cross-links. In terms of biological role, isoform 5 may be involved in nuclear remodeling during sperm head formation in spermatogenesis. A probable SUN1 isoform 5:SYNE3 LINC complex may tether spermatid nuclei to anterior cytoskeletal structures such as actin filaments present at membraneous junctions of spermatids and Sertoli cells. In Mus musculus (Mouse), this protein is SUN domain-containing protein 1.